A 591-amino-acid chain; its full sequence is Complement component C8 beta chain (591 aa).

The signal sequence occupies residues 1-32 (MKNSRTWAWRAPVELFLLCAALGCLSLPGSRG). The propeptide occupies 33–54 (ERPHSFGSNAVNKSFAKSRQMR). The TSP type-1 1 domain occupies 64-117 (DCELSSWSSWTTCDPCQKKRYRYAYLLQPSQFHGEPCNFSDKEVEDCVTNRPCG). 7 disulfide bridges follow: Cys65–Cys100, Cys76–Cys110, Cys79–Cys116, Cys122–Cys133, Cys127–Cys146, Cys140–Cys155, and Cys162–Cys200. Residues Trp70 and Trp73 are each glycosylated (C-linked (Man) tryptophan). Residue Asn101 is glycosylated (N-linked (GlcNAc...) asparagine). In terms of domain architecture, LDL-receptor class A spans 120 to 157 (VRCEGFVCAQTGRCVNRRLLCNGDNDCGDQSDEANCRR). Ca(2+) is bound by residues Leu138, Asn141, Asp143, Asp145, Asp151, and Glu152. In terms of domain architecture, MACPF spans 158–504 (IYKKCQHEMD…EFQKEVSSCH (347 aa)). Asn243 carries an N-linked (GlcNAc...) asparagine glycan. A run of 4 beta stranded transmembrane segments spans residues 252–259 (SGFSFGFK), 262–269 (GIFELGIS), 379–386 (AKNDFKIG), and 392–399 (VYVSLGVS). Cys378 and Cys403 are joined by a disulfide. Thr418 is subject to Phosphothreonine. Intrachain disulfides connect Cys503–Cys550, Cys505–Cys521, Cys508–Cys523, and Cys525–Cys534. An EGF-like domain is found at 505–535 (CAPCQGNGVPVLKGSRCDCICPVGSQGLACE). One can recognise a TSP type-1 2 domain in the interval 545-591 (DGKWNCWSNWSSCSGRRKTRQRQCNNPPPQNGGSPCSGPASETLDCS). C-linked (Man) tryptophan glycosylation is found at Trp551 and Trp554. Cysteines 557 and 590 form a disulfide. The interval 568-591 (CNNPPPQNGGSPCSGPASETLDCS) is disordered.

It belongs to the complement C6/C7/C8/C9 family. As to quaternary structure, heterotrimer of 3 chains: alpha (C8A), beta (C8B) and gamma (C8G); the alpha and gamma chains are disulfide bonded. Component of the membrane attack complex (MAC), composed of complement C5b, C6, C7, C8A, C8B, C8G and multiple copies of the pore-forming subunit C9. N-glycosylated; contains one or two bound glycans. Not O-glycosylated.

It localises to the secreted. The protein localises to the target cell membrane. Its activity is regulated as follows. Membrane attack complex (MAC) assembly is inhibited by CD59, thereby protecting self-cells from damage during complement activation. CD59 acts by binding to the beta-haipins of C8 (C8A and C8B), forming an intermolecular beta-sheet that prevents incorporation of the multiple copies of C9 required for complete formation of the osmolytic pore. MAC assembly is also inhibited by clusterin (CLU) chaperones that inhibit polymerization of C9. Its function is as follows. Component of the membrane attack complex (MAC), a multiprotein complex activated by the complement cascade, which inserts into a target cell membrane and forms a pore, leading to target cell membrane rupture and cell lysis. The MAC is initiated by proteolytic cleavage of C5 into complement C5b in response to the classical, alternative, lectin and GZMK complement pathways. The complement pathways consist in a cascade of proteins that leads to phagocytosis and breakdown of pathogens and signaling that strengthens the adaptive immune system. C8B, together with C8A and C8G, inserts into the target membrane, but does not form pores by itself. During MAC assembly, associates with C5b, C6 and C7 to form the C5b8 intermediate complex that inserts into the target membrane and traverses the bilayer increasing membrane rigidity. This is Complement component C8 beta chain from Homo sapiens (Human).